The sequence spans 339 residues: Dihydroorotate dehydrogenase (quinone) (339 aa).

FMN contacts are provided by residues 62-66 and threonine 86; that span reads AGMDK. Lysine 66 provides a ligand contact to substrate. Residue 111 to 115 participates in substrate binding; that stretch reads NRMGF. Positions 139 and 172 each coordinate FMN. Asparagine 172 contacts substrate. Serine 175 (nucleophile) is an active-site residue. Asparagine 177 is a binding site for substrate. Lysine 217 and threonine 245 together coordinate FMN. 246-247 is a substrate binding site; that stretch reads NT. Residues glycine 268, glycine 297, and 318–319 contribute to the FMN site; that span reads YS.

Belongs to the dihydroorotate dehydrogenase family. Type 2 subfamily. As to quaternary structure, monomer. The cofactor is FMN.

The protein localises to the cell membrane. It carries out the reaction (S)-dihydroorotate + a quinone = orotate + a quinol. The protein operates within pyrimidine metabolism; UMP biosynthesis via de novo pathway; orotate from (S)-dihydroorotate (quinone route): step 1/1. In terms of biological role, catalyzes the conversion of dihydroorotate to orotate with quinone as electron acceptor. The chain is Dihydroorotate dehydrogenase (quinone) from Shewanella sp. (strain ANA-3).